The primary structure comprises 415 residues: Polyketide biosynthesis malonyl-ACP decarboxylase PksF (415 aa).

In terms of domain architecture, Ketosynthase family 3 (KS3) spans 6–407; it reads LPEVVVTGVG…GMNTAVCIQN (402 aa).

The protein belongs to the thiolase-like superfamily. Beta-ketoacyl-ACP synthases family.

The protein localises to the cytoplasm. It carries out the reaction malonyl-[ACP] + H(+) = acetyl-[ACP] + CO2. It participates in antibiotic biosynthesis; bacillaene biosynthesis. Involved in some intermediate steps for the synthesis of the antibiotic polyketide bacillaene which is involved in secondary metabolism. It decarboxylates selectively the malonyl group attached on the acyl-carrier-protein AcpK (Mal-AcpK). This Bacillus subtilis (strain 168) protein is Polyketide biosynthesis malonyl-ACP decarboxylase PksF (pksF).